Here is a 171-residue protein sequence, read N- to C-terminus: uncharacterized protein (171 aa).

Helical transmembrane passes span 13 to 35 (VGAS…IATA) and 50 to 72 (ATVL…AYVV).

The protein localises to the cell membrane. This is an uncharacterized protein from Treponema pallidum (strain Nichols).